A 325-amino-acid chain; its full sequence is NADH-quinone oxidoreductase subunit H (325 aa).

Helical transmembrane passes span 11 to 31 (ILLS…CGAF), 81 to 101 (VIFT…FAIV), 114 to 134 (IGIL…LFAG), 154 to 174 (LSYE…AGSF), 186 to 206 (LWNV…GVAV), 237 to 257 (FFVG…TLFF), 265 to 285 (LPPF…FILI), and 304 to 324 (VCLP…LWQA).

It belongs to the complex I subunit 1 family. As to quaternary structure, NDH-1 is composed of 13 different subunits. Subunits NuoA, H, J, K, L, M, N constitute the membrane sector of the complex.

The protein resides in the cell inner membrane. It carries out the reaction a quinone + NADH + 5 H(+)(in) = a quinol + NAD(+) + 4 H(+)(out). NDH-1 shuttles electrons from NADH, via FMN and iron-sulfur (Fe-S) centers, to quinones in the respiratory chain. The immediate electron acceptor for the enzyme in this species is believed to be ubiquinone. Couples the redox reaction to proton translocation (for every two electrons transferred, four hydrogen ions are translocated across the cytoplasmic membrane), and thus conserves the redox energy in a proton gradient. This subunit may bind ubiquinone. In Klebsiella pneumoniae (strain 342), this protein is NADH-quinone oxidoreductase subunit H.